We begin with the raw amino-acid sequence, 308 residues long: Reticulon-like protein 1 (308 aa).

Polar residues-rich tracts occupy residues methionine 1–alanine 17 and proline 41–isoleucine 66. Disordered stretches follow at residues methionine 1 to alanine 22 and proline 41 to serine 92. Residue asparagine 65 is glycosylated (N-linked (GlcNAc...) asparagine). The segment covering serine 67 to proline 81 has biased composition (low complexity). N-linked (GlcNAc...) asparagine glycans are attached at residues asparagine 113 and asparagine 135. Residues leucine 127–lysine 308 form the Reticulon domain. 4 consecutive transmembrane segments (helical) span residues cysteine 138–leucine 158, phenylalanine 166–glycine 186, proline 233–leucine 253, and tyrosine 255–cysteine 275. N-linked (GlcNAc...) asparagine glycosylation occurs at asparagine 303.

In terms of assembly, interacts with TTS1 and YOP1.

The protein resides in the endoplasmic reticulum membrane. It is found in the nucleus membrane. Required for the correct positioning of the cellular division plane by delimiting the actomyosin ring assembly at the cell equator. Overexpression causes cell lysis. The polypeptide is Reticulon-like protein 1 (rtn1) (Schizosaccharomyces pombe (strain 972 / ATCC 24843) (Fission yeast)).